Reading from the N-terminus, the 277-residue chain is Diaminopimelate epimerase (277 aa).

Substrate-binding residues include Asn13, Gln46, and Asn66. Residue Cys75 is the Proton donor of the active site. Residues 76 to 77 (GN), Asn160, Asn193, and 211 to 212 (ER) each bind substrate. Cys220 acts as the Proton acceptor in catalysis. A substrate-binding site is contributed by 221–222 (GS).

The protein belongs to the diaminopimelate epimerase family. As to quaternary structure, homodimer.

It localises to the cytoplasm. It catalyses the reaction (2S,6S)-2,6-diaminopimelate = meso-2,6-diaminopimelate. It functions in the pathway amino-acid biosynthesis; L-lysine biosynthesis via DAP pathway; DL-2,6-diaminopimelate from LL-2,6-diaminopimelate: step 1/1. Functionally, catalyzes the stereoinversion of LL-2,6-diaminopimelate (L,L-DAP) to meso-diaminopimelate (meso-DAP), a precursor of L-lysine and an essential component of the bacterial peptidoglycan. The protein is Diaminopimelate epimerase of Legionella pneumophila (strain Corby).